A 72-amino-acid chain; its full sequence is Translation initiation factor IF-1 (72 aa).

One can recognise an S1-like domain in the interval 1–72; the sequence is MAKEGAIEVE…TRGRIVYRYK (72 aa).

It belongs to the IF-1 family. Component of the 30S ribosomal translation pre-initiation complex which assembles on the 30S ribosome in the order IF-2 and IF-3, IF-1 and N-formylmethionyl-tRNA(fMet); mRNA recruitment can occur at any time during PIC assembly.

It localises to the cytoplasm. Functionally, one of the essential components for the initiation of protein synthesis. Stabilizes the binding of IF-2 and IF-3 on the 30S subunit to which N-formylmethionyl-tRNA(fMet) subsequently binds. Helps modulate mRNA selection, yielding the 30S pre-initiation complex (PIC). Upon addition of the 50S ribosomal subunit IF-1, IF-2 and IF-3 are released leaving the mature 70S translation initiation complex. This chain is Translation initiation factor IF-1, found in Corynebacterium diphtheriae (strain ATCC 700971 / NCTC 13129 / Biotype gravis).